The sequence spans 159 residues: SsrA-binding protein (159 aa).

Residues 132 to 159 (KDFDKRHTEKERDSDREIQRAMRHGKDD) form a disordered region.

This sequence belongs to the SmpB family.

It is found in the cytoplasm. In terms of biological role, required for rescue of stalled ribosomes mediated by trans-translation. Binds to transfer-messenger RNA (tmRNA), required for stable association of tmRNA with ribosomes. tmRNA and SmpB together mimic tRNA shape, replacing the anticodon stem-loop with SmpB. tmRNA is encoded by the ssrA gene; the 2 termini fold to resemble tRNA(Ala) and it encodes a 'tag peptide', a short internal open reading frame. During trans-translation Ala-aminoacylated tmRNA acts like a tRNA, entering the A-site of stalled ribosomes, displacing the stalled mRNA. The ribosome then switches to translate the ORF on the tmRNA; the nascent peptide is terminated with the 'tag peptide' encoded by the tmRNA and targeted for degradation. The ribosome is freed to recommence translation, which seems to be the essential function of trans-translation. This is SsrA-binding protein from Pseudomonas aeruginosa (strain LESB58).